The following is a 560-amino-acid chain: Formate--tetrahydrofolate ligase (560 aa).

69–76 (TPAGEGKS) contributes to the ATP binding site.

Belongs to the formate--tetrahydrofolate ligase family.

It carries out the reaction (6S)-5,6,7,8-tetrahydrofolate + formate + ATP = (6R)-10-formyltetrahydrofolate + ADP + phosphate. Its pathway is one-carbon metabolism; tetrahydrofolate interconversion. This chain is Formate--tetrahydrofolate ligase, found in Listeria welshimeri serovar 6b (strain ATCC 35897 / DSM 20650 / CCUG 15529 / CIP 8149 / NCTC 11857 / SLCC 5334 / V8).